Here is a 917-residue protein sequence, read N- to C-terminus: Bifunctional aspartokinase/homoserine dehydrogenase 2, chloroplastic (917 aa).

The transit peptide at 1 to 89 (MQGLAVSCQL…EVNTYLPKGD (89 aa)) directs the protein to the chloroplast. Residues 90-338 (MWSVHKFGGT…VSEAVILSTL (249 aa)) are aspartokinase. An interface region spans residues 339–563 (SYQEAWEMSY…LSKTTLAVGI (225 aa)). 2 consecutive ACT domains span residues 413–488 (VEGT…VING) and 494–571 (AVGL…LIGG). Residues 564–917 (IGPGLIGGAL…RLASYLGAPS (354 aa)) form a homoserine dehydrogenase region. NAD(+) contacts are provided by I569 and T650. NADP(+) is bound by residues I569, T650, and K674. NADPH is bound by residues I569, T650, and K674. E701, V704, A706, and L708 together coordinate Na(+). The NADP(+) site is built by G759 and E762. Positions 762 and 773 each coordinate L-homoserine. K777 serves as the catalytic Proton donor. An NAD(+)-binding site is contributed by G894. G894 is an NADP(+) binding site. G894 provides a ligand contact to NADPH.

The protein in the N-terminal section; belongs to the aspartokinase family. This sequence in the C-terminal section; belongs to the homoserine dehydrogenase family. Homo- or heterodimer. A metal cation is required as a cofactor.

It is found in the plastid. The protein localises to the chloroplast. The catalysed reaction is L-homoserine + NADP(+) = L-aspartate 4-semialdehyde + NADPH + H(+). It carries out the reaction L-homoserine + NAD(+) = L-aspartate 4-semialdehyde + NADH + H(+). The enzyme catalyses L-aspartate + ATP = 4-phospho-L-aspartate + ADP. It functions in the pathway amino-acid biosynthesis; L-lysine biosynthesis via DAP pathway; (S)-tetrahydrodipicolinate from L-aspartate: step 1/4. Its pathway is amino-acid biosynthesis; L-methionine biosynthesis via de novo pathway; L-homoserine from L-aspartate: step 1/3. The protein operates within amino-acid biosynthesis; L-methionine biosynthesis via de novo pathway; L-homoserine from L-aspartate: step 3/3. It participates in amino-acid biosynthesis; L-threonine biosynthesis; L-threonine from L-aspartate: step 1/5. It functions in the pathway amino-acid biosynthesis; L-threonine biosynthesis; L-threonine from L-aspartate: step 3/5. Its function is as follows. Bifunctional aspartate kinase and homoserine dehydrogenase that catalyzes the first and the third steps toward the synthesis of lysine, methionine and threonine from aspartate. This Zea mays (Maize) protein is Bifunctional aspartokinase/homoserine dehydrogenase 2, chloroplastic (AKHSDH2).